We begin with the raw amino-acid sequence, 159 residues long: MAERPGPPGGAVSATAYPDTPAEFPPHLQAGAMRRRFWGVFNCLCAGAFGALAAASAKLAFGSEVSMGLCVLGIIVMASTNSLMWTFFSRGLSFSMSSAIASVTVTFSNILSSAFLGYVLYGECQEVLWWGGVFLILCGLTLIHRKLPPTWKPLPHKQQ.

Transmembrane regions (helical) follow at residues 37-57 (FWGVFNCLCAGAFGALAAASA), 59-79 (LAFGSEVSMGLCVLGIIVMAS), 100-120 (IASVTVTFSNILSSAFLGYVL), and 124-144 (CQEVLWWGGVFLILCGLTLIH).

The protein resides in the membrane. The protein is Transmembrane protein 42 (TMEM42) of Homo sapiens (Human).